A 407-amino-acid chain; its full sequence is MEGESTLGVLSGFVLGALTFHHLNTDSDTEGFLLGEMKGEAKNSITDSQMDNVKVVYTIDIQKYIPCYRLFSFYNSLGEVNEHALKKVLSNVRKTVVGWYKFRRHSDQIMTFREQLLHRNLQTHLSSPELVFLLLTPSITTESCSTHCLEHALYKPQRGLFHRVPLVVTNLGMSDQLGYKTEPASCTSTVFSRAVRTHSSQFFNEDGSLKEVHKINEMYAAVQEELKSICQKVEQSEREVEKLLMDVNQLKEVRRTQQARATGAGEKNVQRNPQENILLCQALRTFFPESEVLHSCVISLKNRHISPSGCNVNHHVDVVDQLTLMVEYVYSPEASPVPTAQLRKRKALDTHDQGSVKRPRLLETESRPSVAASRSRHQDKASSSSLDIDIEMGSPEDDADYPRSPTF.

The MPN domain maps to 7–155; the sequence is LGVLSGFVLG…THCLEHALYK (149 aa). Ser-48 carries the post-translational modification Phosphoserine. A coiled-coil region spans residues 209–259; it reads LKEVHKINEMYAAVQEELKSICQKVEQSEREVEKLLMDVNQLKEVRRTQQA. Residues 344–407 form a disordered region; that stretch reads KRKALDTHDQ…DADYPRSPTF (64 aa). Basic and acidic residues predominate over residues 347-366; that stretch reads ALDTHDQGSVKRPRLLETES. Phosphoserine is present on residues Ser-384, Ser-385, Ser-394, and Ser-404. Acidic residues predominate over residues 388–399; sequence IDIEMGSPEDDA. The short motif at 404–407 is the pSXXF motif element; the sequence is SPTF.

It belongs to the FAM175 family. Abraxas subfamily. Component of the ARISC complex, at least composed of UIMC1/RAP80, ABRAXAS1, BRCC3/BRCC36, BABAM2 and BABAM1/NBA1. Component of the BRCA1-A complex, at least composed of the BRCA1, BARD1, UIMC1/RAP80, ABRAXAS1, BRCC3/BRCC36, BABAM2 and BABAM1/NBA1. In the complex, interacts directly with UIMC1/RAP80, BRCC3/BRCC36 and BABAM2. Homodimer. Interacts directly (when phosphorylated at Ser-404) with BRCA1. The phosphorylated homodimer can interact directly with two BRCA1 chains, giving rise to a heterotetramer. Binds polyubiquitin. In terms of processing, phosphorylation of Ser-404 of the pSXXF motif by ATM or ATR constitutes a specific recognition motif for the BRCT domain of BRCA1.

The protein localises to the nucleus. In terms of biological role, involved in DNA damage response and double-strand break (DSB) repair. Component of the BRCA1-A complex, acting as a central scaffold protein that assembles the various components of the complex and mediates the recruitment of BRCA1. The BRCA1-A complex specifically recognizes 'Lys-63'-linked ubiquitinated histones H2A and H2AX at DNA lesion sites, leading to target the BRCA1-BARD1 heterodimer to sites of DNA damage at DSBs. This complex also possesses deubiquitinase activity that specifically removes 'Lys-63'-linked ubiquitin on histones H2A and H2AX. The protein is BRCA1-A complex subunit Abraxas 1 of Mus musculus (Mouse).